The chain runs to 147 residues: Hemoglobin subunit beta (147 aa).

An N-acetylvaline modification is found at V2. The region spanning 3–147 is the Globin domain; the sequence is HLTPDEKAAV…VANALAHKYH (145 aa). T13 carries the post-translational modification Phosphothreonine. S45 carries the phosphoserine modification. K60 carries the N6-acetyllysine modification. H64 is a heme b binding site. An N6-acetyllysine modification is found at K83. H93 provides a ligand contact to heme b. S-nitrosocysteine is present on C94. K145 bears the N6-acetyllysine mark.

This sequence belongs to the globin family. As to quaternary structure, heterotetramer of two alpha chains and two beta chains. In terms of tissue distribution, red blood cells.

Its function is as follows. Involved in oxygen transport from the lung to the various peripheral tissues. This chain is Hemoglobin subunit beta (HBB), found in Colobus polykomos (Western black-and-white colobus monkey).